The primary structure comprises 165 residues: Transcription elongation factor GreA (165 aa).

Positions 55 to 78 (AAKEEQGKQELRVRQLTQLLENAK) form a coiled coil.

This sequence belongs to the GreA/GreB family.

Its function is as follows. Necessary for efficient RNA polymerase transcription elongation past template-encoded arresting sites. The arresting sites in DNA have the property of trapping a certain fraction of elongating RNA polymerases that pass through, resulting in locked ternary complexes. Cleavage of the nascent transcript by cleavage factors such as GreA or GreB allows the resumption of elongation from the new 3'terminus. GreA releases sequences of 2 to 3 nucleotides. This Streptomyces avermitilis (strain ATCC 31267 / DSM 46492 / JCM 5070 / NBRC 14893 / NCIMB 12804 / NRRL 8165 / MA-4680) protein is Transcription elongation factor GreA.